A 206-amino-acid chain; its full sequence is MDTPTKSRRANGSIAFPEDFKPVKRNIQSELNQELETCLFSFRDKEYSAEKFSGIVFREMGWKDFDRLDKERISLYWVDQVIHGVTGVLWSPGGYEDKENYFGSSLNFLKPSFKSPTAIVSQNGDVKVTYWFNDLKNKKVIQLQVIFDTNGDIKSRTILSSGDSQFYTGLSVIVGGATALALGLFFLRNKKFVTPVLRIASSKFKN.

The chain crosses the membrane as a helical span at residues 166-186 (FYTGLSVIVGGATALALGLFF).

The protein localises to the membrane. This is an uncharacterized protein from Dictyostelium discoideum (Social amoeba).